The following is a 271-amino-acid chain: Sec-independent protein translocase protein TatC (271 aa).

A run of 6 helical transmembrane segments spans residues 35 to 55, 93 to 113, 124 to 144, 178 to 198, 213 to 233, and 234 to 254; these read IIWTFVYIAAGFGVCWWWHEQ, AFIAGLFVASPFVLYQVWLFI, YVLPFMFSTVLLFLGGGVFGY, IILGLGIVFEMPILVFFLALM, SILVIFVIAAIITPTTDIMNM, and CVFAAPMILLYILSIGVAFLV.

Belongs to the TatC family. Forms a complex with TatA.

The protein resides in the cell inner membrane. In terms of biological role, part of the twin-arginine translocation (Tat) system that transports large folded proteins containing a characteristic twin-arginine motif in their signal peptide across membranes. This is Sec-independent protein translocase protein TatC from Koribacter versatilis (strain Ellin345).